Reading from the N-terminus, the 783-residue chain is Cilia- and flagella-associated protein 91 (783 aa).

Residues 748 to 760 are compositionally biased toward acidic residues; sequence EDFELEEEAESLD. Positions 748-783 are disordered; sequence EDFELEEEAESLDSEVPTVSVSKTSTIKPTQDEGEG. Residues 764-776 show a composition bias toward polar residues; sequence PTVSVSKTSTIKP.

This sequence belongs to the CFAP91 family. Part of a complex containing MYCBP, AKAP1 and PRKAR2B. Interacts with MYCBP and AKAP1. Interacts with CFAP61. In terms of processing, phosphorylated by PKA. In terms of tissue distribution, expressed in the testis, in cells involved in spermatogenesis.

Its subcellular location is the cytoplasm. The protein localises to the mitochondrion. It is found in the cytoskeleton. The protein resides in the cilium axoneme. Involved in sperm flagellum axonemal organization and function. May regulate cilium motility through its role in the assembly of the axonemal radial spokes. The chain is Cilia- and flagella-associated protein 91 from Mus musculus (Mouse).